Here is a 156-residue protein sequence, read N- to C-terminus: Ribosomal RNA large subunit methyltransferase H (156 aa).

S-adenosyl-L-methionine contacts are provided by residues leucine 73, glycine 104, and 123–128; that span reads LSPLTL.

It belongs to the RNA methyltransferase RlmH family. Homodimer.

Its subcellular location is the cytoplasm. It catalyses the reaction pseudouridine(1915) in 23S rRNA + S-adenosyl-L-methionine = N(3)-methylpseudouridine(1915) in 23S rRNA + S-adenosyl-L-homocysteine + H(+). In terms of biological role, specifically methylates the pseudouridine at position 1915 (m3Psi1915) in 23S rRNA. The chain is Ribosomal RNA large subunit methyltransferase H from Aliivibrio fischeri (strain ATCC 700601 / ES114) (Vibrio fischeri).